Consider the following 418-residue polypeptide: Inner capsid protein sigma-2 (418 aa).

Belongs to the orthoreovirus sigma-1 protein family. Interacts with protein mu-NS; in viral inclusions.

It localises to the virion. In terms of biological role, inner capsid (core) component. The sequence is that of Inner capsid protein sigma-2 (S2) from Mammalia (T1L).